Reading from the N-terminus, the 352-residue chain is Rhodopsin, deep-sea form (352 aa).

Residues 1 to 36 are Extracellular-facing; sequence MNGTEGPNFYIPMSNITGVVRSPFEYPQYYLAEPWA. Asparagine 2 and asparagine 15 each carry an N-linked (GlcNAc...) asparagine glycan. The chain crosses the membrane as a helical span at residues 37–61; that stretch reads YTILAAYMFTLILLGFPVNFLTLYV. At 62–73 the chain is on the cytoplasmic side; the sequence is TIEHKKLRTPLN. Residues 74–98 form a helical membrane-spanning segment; sequence YILLNLAVANLFMVFGGFTTTVYTS. Residues 99–113 are Extracellular-facing; it reads MHGYFVFGETGCNLE. A disulfide bridge connects residues cysteine 110 and cysteine 187. The chain crosses the membrane as a helical span at residues 114–133; the sequence is GYFATLGGEISLWSLVVLAI. The Cytoplasmic portion of the chain corresponds to 134–152; that stretch reads ERWVVVCKPMSNFRFGENH. The chain crosses the membrane as a helical span at residues 153–176; it reads AIMGLAFTWIMANSCAMPPLFGWS. Residues 177-202 are Extracellular-facing; sequence RYIPEGMQCSCGVDYYTLKPEVNNES. Asparagine 200 carries an N-linked (GlcNAc...) asparagine glycan. The chain crosses the membrane as a helical span at residues 203 to 230; that stretch reads FVIYMFIVHFSVPLTIISFCYGRLVCTV. Topologically, residues 231–252 are cytoplasmic; it reads KEAAAQQQESETTQRAEREVTR. The helical transmembrane segment at 253-276 threads the bilayer; it reads MVVIMVIAFLVCWVPYASVAWYIF. The Extracellular segment spans residues 277–284; that stretch reads THQGSTFG. Residues 285 to 309 traverse the membrane as a helical segment; sequence PVFMTVPSFFAKSSAIYNPLIYICL. Residue lysine 296 is modified to N6-(retinylidene)lysine. Over 310-352 the chain is Cytoplasmic; sequence NSQFRNCMITTLFCGKNPFQEEEGASTTASKTEASSVSSVSPA. Residue cysteine 323 is the site of S-palmitoyl cysteine attachment. A disordered region spans residues 333 to 352; the sequence is GASTTASKTEASSVSSVSPA. Residues 334–352 show a composition bias toward low complexity; the sequence is ASTTASKTEASSVSSVSPA.

It belongs to the G-protein coupled receptor 1 family. Opsin subfamily. In terms of processing, phosphorylated on some or all of the serine and threonine residues present in the C-terminal region. Rod shaped photoreceptor cells which mediates vision in dim light.

Its subcellular location is the membrane. In terms of biological role, visual pigments such as rhodopsin and porphyropsin are light-absorbing molecules that mediate vision. Rhodopsin consists of an apoprotein, opsin, covalently linked to 11-cis-retinal. This receptor is coupled to the activation of phospholipase C. Porphyropsin consists of opsin covalently linked to 11-cis 3,4-didehydroretinal. The protein is Rhodopsin, deep-sea form of Anguilla anguilla (European freshwater eel).